The sequence spans 203 residues: Large ribosomal subunit protein bL25 (203 aa).

The protein belongs to the bacterial ribosomal protein bL25 family. CTC subfamily. In terms of assembly, part of the 50S ribosomal subunit; part of the 5S rRNA/L5/L18/L25 subcomplex. Contacts the 5S rRNA. Binds to the 5S rRNA independently of L5 and L18.

Its function is as follows. This is one of the proteins that binds to the 5S RNA in the ribosome where it forms part of the central protuberance. The sequence is that of Large ribosomal subunit protein bL25 from Rickettsia peacockii (strain Rustic).